The sequence spans 154 residues: Putative peroxiredoxin MT1643 (154 aa).

Residues 1 to 153 (MKTGDTVADF…ALATLRAIRS (153 aa)) form the Thioredoxin domain. The active-site Cysteine sulfenic acid (-SOH) intermediate is the C44. C44 and C49 are joined by a disulfide.

It belongs to the peroxiredoxin family. BCP/PrxQ subfamily. Monomer.

The catalysed reaction is a hydroperoxide + [thioredoxin]-dithiol = an alcohol + [thioredoxin]-disulfide + H2O. In terms of biological role, thiol-specific peroxidase that catalyzes the reduction of hydrogen peroxide and organic hydroperoxides to water and alcohols, respectively. Plays a role in cell protection against oxidative stress by detoxifying peroxides and as sensor of hydrogen peroxide-mediated signaling events. The sequence is that of Putative peroxiredoxin MT1643 (bcpB) from Mycobacterium tuberculosis (strain CDC 1551 / Oshkosh).